We begin with the raw amino-acid sequence, 461 residues long: Aldehyde dehydrogenase LUC3 (461 aa).

215–220 (GSTATG) provides a ligand contact to NAD(+). Residues E237 and C271 contribute to the active site.

It belongs to the aldehyde dehydrogenase family.

The enzyme catalyses an aldehyde + NAD(+) + H2O = a carboxylate + NADH + 2 H(+). It participates in mycotoxin biosynthesis. Functionally, aldehyde dehydrogenase; part of the gene cluster that mediates the biosynthesis of the mycotoxin lucilactaene and the lucilactaene-related compound NG-391 that act as cell cycle inhibitors with potent growth inhibitory activity against malarial parasites, moderate growth inhibitory activity against cancer cells, and no activity against bacteria and fungi. LUC3 is important for lucilactaene biosynthesis and performs the oxidation of the C-20 alcoholic analog prelucilactaene G into a carboxylic derivative that has still to be identified. The pathway begins with the hybrid PKS-NRPS synthetase LUC5 which is responsible for the condensation of one acetyl-coenzyme A (CoA) unit with six malonyl-CoA units and the amide linkage of the arising heptaketide and homoserine, subsequently releasing the first intermediate prelucilactaene B. Both the cytochrome P450 monooxygenase LUC2 and the hydrolase LUC6 function in parallel in modification of prelucilactaene B. LUC6 may catalyze the 2-pyrrolidone ring formation to form prelucilactaene C from prelucilactaene B, followed by C-15 hydroxylation by the same enzyme to give prelucilactaene D, which is then converted to prelucilactaene E by epoxidation, and finally to prelucilactaene F by cyclization. Prelucilactane D, prelucilactaene E, and prelucilactaene F can be converted to dihydrolucilactaene, NG391, and lucilactaene, respectively, via C-20 methyl group hydroxylation by the cytochrome P450 monooxygenase LUC2. However, LUC2, unlike FUS8 in fusarin C biosynthesis, is not enough for the full oxidation of the C-20 methyl group into carboxylic acid, which is a prerequisite for the final methylation step. The aldehyde dehydrogenase LUC3 is involved in the biosynthesis by further oxidation of the C-20 alcoholic analog prelucilactaene G into a carboxylic derivative. This unidentified carboxylic derivative may be converted to demethyllucilactaene. As the last step, the methyltransferase LUC1 methylates the hydroxyl group at C-21 of demethyllucilactaene to generate lucilactaene. The protein is Aldehyde dehydrogenase LUC3 of Fusarium sp.